A 186-amino-acid polypeptide reads, in one-letter code: Transcription factor FapR (186 aa).

Belongs to the FapR family.

Functionally, transcriptional factor involved in regulation of membrane lipid biosynthesis by repressing genes involved in fatty acid and phospholipid metabolism. This chain is Transcription factor FapR, found in Halalkalibacterium halodurans (strain ATCC BAA-125 / DSM 18197 / FERM 7344 / JCM 9153 / C-125) (Bacillus halodurans).